Here is a 402-residue protein sequence, read N- to C-terminus: Endo-polygalacturonase (402 aa).

The first 23 residues, 1-23, serve as a signal peptide directing secretion; the sequence is MEYQSGKRVLSLSLGLIGLFSAS. 2 disulfides stabilise this stretch: cysteine 41–cysteine 62 and cysteine 115–cysteine 125. Aspartate 249 functions as the Proton donor in the catalytic mechanism. Histidine 277 is a catalytic residue.

The protein belongs to the glycosyl hydrolase 28 family. Monomer.

The protein resides in the secreted. It carries out the reaction (1,4-alpha-D-galacturonosyl)n+m + H2O = (1,4-alpha-D-galacturonosyl)n + (1,4-alpha-D-galacturonosyl)m.. In terms of biological role, involved in maceration and soft-rotting of plant tissue. This chain is Endo-polygalacturonase (pehA), found in Pectobacterium parmentieri.